The following is a 93-amino-acid chain: Small ribosomal subunit protein uS19 (93 aa).

Belongs to the universal ribosomal protein uS19 family.

Functionally, protein S19 forms a complex with S13 that binds strongly to the 16S ribosomal RNA. In Desulfitobacterium hafniense (strain DSM 10664 / DCB-2), this protein is Small ribosomal subunit protein uS19.